We begin with the raw amino-acid sequence, 100 residues long: Toxin ParE3 (100 aa).

It belongs to the RelE toxin family.

Toxic component of a type II toxin-antitoxin (TA) system. Its toxic effect is neutralized by coexpression with cognate antitoxin ParD3 but no other ParD or RelB antitoxin. This Caulobacter vibrioides (strain ATCC 19089 / CIP 103742 / CB 15) (Caulobacter crescentus) protein is Toxin ParE3 (parE3).